The chain runs to 184 residues: Probable RNA 2'-phosphotransferase (184 aa).

It belongs to the KptA/TPT1 family.

Its function is as follows. Removes the 2'-phosphate from RNA via an intermediate in which the phosphate is ADP-ribosylated by NAD followed by a presumed transesterification to release the RNA and generate ADP-ribose 1''-2''-cyclic phosphate (APPR&gt;P). May function as an ADP-ribosylase. The protein is Probable RNA 2'-phosphotransferase of Rhodopirellula baltica (strain DSM 10527 / NCIMB 13988 / SH1).